The sequence spans 360 residues: Tryptophan--tRNA ligase, mitochondrial (360 aa).

ATP is bound by residues Gln38 and 44–47; that span reads HLGN. The short motif at 39–47 is the 'HIGH' region element; sequence PTGIPHLGN. L-tryptophan is bound at residue Asp168. ATP-binding positions include 180–182 and 229–233; these read GED and KMSKS. Residues 220-230 show a composition bias toward basic and acidic residues; that stretch reads IRSLREPEKKM. The tract at residues 220 to 241 is disordered; that stretch reads IRSLREPEKKMSKSSGGPRSRI. The 'KMSKS' region motif lies at 229–233; it reads KMSKS.

Belongs to the class-I aminoacyl-tRNA synthetase family.

The protein localises to the mitochondrion matrix. The enzyme catalyses tRNA(Trp) + L-tryptophan + ATP = L-tryptophyl-tRNA(Trp) + AMP + diphosphate + H(+). In terms of biological role, catalyzes the attachment of tryptophan to tRNA(Trp). The chain is Tryptophan--tRNA ligase, mitochondrial from Caenorhabditis elegans.